The following is a 238-amino-acid chain: tRNA (guanine-N(7)-)-methyltransferase (238 aa).

Residues E70, D95, D122, and D145 each contribute to the S-adenosyl-L-methionine site. The active site involves D145. Substrate contacts are provided by residues K149, D181, and 216-219; that span reads TKFE.

The protein belongs to the class I-like SAM-binding methyltransferase superfamily. TrmB family.

The enzyme catalyses guanosine(46) in tRNA + S-adenosyl-L-methionine = N(7)-methylguanosine(46) in tRNA + S-adenosyl-L-homocysteine. Its pathway is tRNA modification; N(7)-methylguanine-tRNA biosynthesis. In terms of biological role, catalyzes the formation of N(7)-methylguanine at position 46 (m7G46) in tRNA. The protein is tRNA (guanine-N(7)-)-methyltransferase of Neisseria meningitidis serogroup A / serotype 4A (strain DSM 15465 / Z2491).